The sequence spans 277 residues: Phosphoenolpyruvate synthase regulatory protein (277 aa).

Residue 157–164 (GVSRCGKT) participates in ADP binding.

This sequence belongs to the pyruvate, phosphate/water dikinase regulatory protein family. PSRP subfamily.

It catalyses the reaction [pyruvate, water dikinase] + ADP = [pyruvate, water dikinase]-phosphate + AMP + H(+). It carries out the reaction [pyruvate, water dikinase]-phosphate + phosphate + H(+) = [pyruvate, water dikinase] + diphosphate. Functionally, bifunctional serine/threonine kinase and phosphorylase involved in the regulation of the phosphoenolpyruvate synthase (PEPS) by catalyzing its phosphorylation/dephosphorylation. The sequence is that of Phosphoenolpyruvate synthase regulatory protein from Salmonella agona (strain SL483).